The sequence spans 160 residues: uncharacterized protein (160 aa).

The helical transmembrane segment at 137 to 157 (YNILFVVVILLLLFVAWRCYV) threads the bilayer.

Its subcellular location is the host membrane. It is found in the virion. This is an uncharacterized protein from Acanthamoeba polyphaga mimivirus (APMV).